Here is a 209-residue protein sequence, read N- to C-terminus: MPDFSIENEISKLINNKHCTIVGVDEVGYGSLAGPVVSAAVFFPKHDNHITYNIQDSKKLTPKKRLEIYNIITPMVKWSIGLAEVHEIDQYNILNATHIAMQRALRGLNSNIDYVIVDGNKVPELPWNAKAVVDGDNISISIAAASIIAKVTRDKLMETLHIQFPQYNWNKNKGYGTKHHLESLHKYGKTIHHRNTFAPASGITKLYNK.

One can recognise an RNase H type-2 domain in the interval 19–209 (CTIVGVDEVG…ASGITKLYNK (191 aa)). Residues Asp-25, Glu-26, and Asp-118 each coordinate a divalent metal cation.

It belongs to the RNase HII family. It depends on Mn(2+) as a cofactor. Mg(2+) is required as a cofactor.

The protein resides in the cytoplasm. The enzyme catalyses Endonucleolytic cleavage to 5'-phosphomonoester.. Its function is as follows. Endonuclease that specifically degrades the RNA of RNA-DNA hybrids. This Ehrlichia chaffeensis (strain ATCC CRL-10679 / Arkansas) protein is Ribonuclease HII.